The following is a 98-amino-acid chain: Small ribosomal subunit protein bS6 (98 aa).

Belongs to the bacterial ribosomal protein bS6 family.

Binds together with bS18 to 16S ribosomal RNA. The polypeptide is Small ribosomal subunit protein bS6 (Limosilactobacillus reuteri (strain DSM 20016) (Lactobacillus reuteri)).